A 1681-amino-acid polypeptide reads, in one-letter code: Meiosis regulator and mRNA stability factor 1 (1681 aa).

The region spanning 340-477 (IGVFWDIENC…ALLHHAHELI (138 aa)) is the NYN domain. 2 disordered regions span residues 576–595 (VNET…PKKV) and 638–717 (QMQS…DVVF). The span at 638–647 (QMQSKSNKTS) shows a compositional bias: polar residues. Residues 648–658 (QQEKDKKRNGD) show a composition bias toward basic and acidic residues. The segment covering 659-690 (KQGTLSQSSPLCTNQMLQTARNVGTDNTASKS) has biased composition (polar residues). A compositionally biased stretch (basic and acidic residues) spans 692-715 (QKRDDTTRKSNADSQKEQKNKEDV). The RRM domain maps to 779–858 (ADIQIGNLDY…KRIQVSLATG (80 aa)). HTH OST-type domains follow at residues 863–937 (SLSL…SPMG), 991–1067 (SLKT…HNKP), 1087–1161 (QLIQ…LTHR), 1163–1238 (QVKR…IPKR), 1247–1321 (RTKQ…LTEM), 1323–1398 (RIKA…INRK), 1399–1472 (SLRS…SVQL), and 1474–1548 (SLYV…LKND). Polar residues predominate over residues 1637–1648 (EPSTQNICPQES). The disordered stretch occupies residues 1637 to 1662 (EPSTQNICPQESKSTKELPESPVKRQ). Positions 1649-1659 (KSTKELPESPV) are enriched in basic and acidic residues.

It is found in the peroxisome. Essential regulator of oogenesis required for female meiotic progression to repress transposable elements and preventing their mobilization, which is essential for the germline integrity. The polypeptide is Meiosis regulator and mRNA stability factor 1 (Xenopus tropicalis (Western clawed frog)).